The sequence spans 93 residues: Pyrimidine/purine nucleoside phosphorylase (93 aa).

This sequence belongs to the nucleoside phosphorylase PpnP family.

It carries out the reaction a purine D-ribonucleoside + phosphate = a purine nucleobase + alpha-D-ribose 1-phosphate. It catalyses the reaction adenosine + phosphate = alpha-D-ribose 1-phosphate + adenine. The enzyme catalyses cytidine + phosphate = cytosine + alpha-D-ribose 1-phosphate. The catalysed reaction is guanosine + phosphate = alpha-D-ribose 1-phosphate + guanine. It carries out the reaction inosine + phosphate = alpha-D-ribose 1-phosphate + hypoxanthine. It catalyses the reaction thymidine + phosphate = 2-deoxy-alpha-D-ribose 1-phosphate + thymine. The enzyme catalyses uridine + phosphate = alpha-D-ribose 1-phosphate + uracil. The catalysed reaction is xanthosine + phosphate = alpha-D-ribose 1-phosphate + xanthine. In terms of biological role, catalyzes the phosphorolysis of diverse nucleosides, yielding D-ribose 1-phosphate and the respective free bases. Can use uridine, adenosine, guanosine, cytidine, thymidine, inosine and xanthosine as substrates. Also catalyzes the reverse reactions. In Aliivibrio fischeri (strain ATCC 700601 / ES114) (Vibrio fischeri), this protein is Pyrimidine/purine nucleoside phosphorylase.